The following is a 527-amino-acid chain: MKTVDKSYMKELQTNHIHHNLSVAQLVEKILYRQEGILTSTGAVRATTGTYTGRSPEDKFTVKDEVSDQHVNWGKVNKPIQEEVFNQLLSKVISYLNEKQEIFKFQGFAGSDHTYRLPIQVINEYAWHNLFSRQLFITPTEEELNNHQAEFTVISAPGFKADPAIDGTNSETFILISFKKRIVLIGGTEYAGEIKKSIFSVMNYLLPQQDVLSMHCSANVGQEGDVALFFGLSGTGKTTLSADPYRKLIGDDEHGWSPNGVFNIEGGCYAKCINLSEEKEPQIYNAIRYGTVLENVILNDNSREPDYDDTSLTENTRAAYPLENIDNIINPSVAGHPNTIIFLTADASGTLPPISKLTKEQAMYHFLSGYTSKLAGTERGVTEPLATFSACFGSPFLPLAPSKYAEMLGKKIDMFDTNVFLINTGWTGGSYGVGDRIKLSFTRAMVHSALEGELNSIETITDEIFGLQIPAHVPGVPDELLVPKQTWGNKEAYMKEAQTLALKFHENFKKFTLASETIKQAGPLYKG.

Positions 54, 190, and 196 each coordinate substrate. ATP is bound by residues Lys196, His215, and 231–239; that span reads GLSGTGKTT. Lys196 and His215 together coordinate Mn(2+). Asp252 serves as a coordination point for Mn(2+). ATP contacts are provided by residues Glu280, Arg317, 436–437, and Thr442; that span reads RI. Substrate is bound at residue Arg317.

This sequence belongs to the phosphoenolpyruvate carboxykinase (ATP) family. Requires Mn(2+) as cofactor.

It localises to the cytoplasm. The enzyme catalyses oxaloacetate + ATP = phosphoenolpyruvate + ADP + CO2. It participates in carbohydrate biosynthesis; gluconeogenesis. Its function is as follows. Involved in the gluconeogenesis. Catalyzes the conversion of oxaloacetate (OAA) to phosphoenolpyruvate (PEP) through direct phosphoryl transfer between the nucleoside triphosphate and OAA. This chain is Phosphoenolpyruvate carboxykinase (ATP), found in Oceanobacillus iheyensis (strain DSM 14371 / CIP 107618 / JCM 11309 / KCTC 3954 / HTE831).